A 341-amino-acid chain; its full sequence is L-threonine 3-dehydrogenase (341 aa).

Cys-38 lines the Zn(2+) pocket. Catalysis depends on charge relay system residues Thr-40 and His-43. Zn(2+) is bound by residues His-63, Glu-64, Cys-93, Cys-96, Cys-99, and Cys-107. Residues Ile-175, Asp-195, Arg-200, 262–264, and 286–287 contribute to the NAD(+) site; these read LGI and IY.

The protein belongs to the zinc-containing alcohol dehydrogenase family. As to quaternary structure, homotetramer. It depends on Zn(2+) as a cofactor.

It localises to the cytoplasm. It catalyses the reaction L-threonine + NAD(+) = (2S)-2-amino-3-oxobutanoate + NADH + H(+). Its pathway is amino-acid degradation; L-threonine degradation via oxydo-reductase pathway; glycine from L-threonine: step 1/2. Its function is as follows. Catalyzes the NAD(+)-dependent oxidation of L-threonine to 2-amino-3-ketobutyrate. The polypeptide is L-threonine 3-dehydrogenase (Escherichia coli (strain K12 / MC4100 / BW2952)).